The following is a 440-amino-acid chain: Light-independent protochlorophyllide reductase subunit N (440 aa).

The disordered stretch occupies residues 1–24 (MTCRPALSDSHPPEPGTPSSPSFG). 3 residues coordinate [4Fe-4S] cluster: cysteine 42, cysteine 67, and cysteine 128.

Belongs to the BchN/ChlN family. In terms of assembly, protochlorophyllide reductase is composed of three subunits; BchL, BchN and BchB. Forms a heterotetramer of two BchB and two BchN subunits. [4Fe-4S] cluster serves as cofactor.

The catalysed reaction is chlorophyllide a + oxidized 2[4Fe-4S]-[ferredoxin] + 2 ADP + 2 phosphate = protochlorophyllide a + reduced 2[4Fe-4S]-[ferredoxin] + 2 ATP + 2 H2O. It participates in porphyrin-containing compound metabolism; bacteriochlorophyll biosynthesis (light-independent). Its function is as follows. Component of the dark-operative protochlorophyllide reductase (DPOR) that uses Mg-ATP and reduced ferredoxin to reduce ring D of protochlorophyllide (Pchlide) to form chlorophyllide a (Chlide). This reaction is light-independent. The NB-protein (BchN-BchB) is the catalytic component of the complex. In Rhodospirillum rubrum (strain ATCC 11170 / ATH 1.1.1 / DSM 467 / LMG 4362 / NCIMB 8255 / S1), this protein is Light-independent protochlorophyllide reductase subunit N.